We begin with the raw amino-acid sequence, 131 residues long: Small ribosomal subunit protein eS8 (131 aa).

The interval 1–38 (MKLGAYYKGGDLKKPSGGKKRKVRRTKKKALGGGPPQI) is disordered. Residues 16–30 (SGGKKRKVRRTKKKA) are compositionally biased toward basic residues.

This sequence belongs to the eukaryotic ribosomal protein eS8 family. Part of the 30S ribosomal subunit.

This is Small ribosomal subunit protein eS8 from Pyrobaculum arsenaticum (strain DSM 13514 / JCM 11321 / PZ6).